The following is an 87-amino-acid chain: Phosphoribosyl-ATP pyrophosphatase (87 aa).

Belongs to the PRA-PH family.

Its subcellular location is the cytoplasm. It carries out the reaction 1-(5-phospho-beta-D-ribosyl)-ATP + H2O = 1-(5-phospho-beta-D-ribosyl)-5'-AMP + diphosphate + H(+). The protein operates within amino-acid biosynthesis; L-histidine biosynthesis; L-histidine from 5-phospho-alpha-D-ribose 1-diphosphate: step 2/9. The sequence is that of Phosphoribosyl-ATP pyrophosphatase from Nocardia farcinica (strain IFM 10152).